We begin with the raw amino-acid sequence, 299 residues long: Bifunctional protein FolD 2 (299 aa).

This sequence belongs to the tetrahydrofolate dehydrogenase/cyclohydrolase family. In terms of assembly, homodimer.

It carries out the reaction (6R)-5,10-methylene-5,6,7,8-tetrahydrofolate + NADP(+) = (6R)-5,10-methenyltetrahydrofolate + NADPH. It catalyses the reaction (6R)-5,10-methenyltetrahydrofolate + H2O = (6R)-10-formyltetrahydrofolate + H(+). It functions in the pathway one-carbon metabolism; tetrahydrofolate interconversion. Its function is as follows. Catalyzes the oxidation of 5,10-methylenetetrahydrofolate to 5,10-methenyltetrahydrofolate and then the hydrolysis of 5,10-methenyltetrahydrofolate to 10-formyltetrahydrofolate. The sequence is that of Bifunctional protein FolD 2 (FOLD2) from Arabidopsis thaliana (Mouse-ear cress).